Reading from the N-terminus, the 278-residue chain is Large ribosomal subunit protein uL2 (278 aa).

The disordered stretch occupies residues 222-264 (GVAMNPIDHPHGGGEGRTSGGRHPVTPWGKPTKGRKTRKNKAT).

The protein belongs to the universal ribosomal protein uL2 family. Part of the 50S ribosomal subunit. Forms a bridge to the 30S subunit in the 70S ribosome.

One of the primary rRNA binding proteins. Required for association of the 30S and 50S subunits to form the 70S ribosome, for tRNA binding and peptide bond formation. It has been suggested to have peptidyltransferase activity; this is somewhat controversial. Makes several contacts with the 16S rRNA in the 70S ribosome. The polypeptide is Large ribosomal subunit protein uL2 (Phenylobacterium zucineum (strain HLK1)).